Here is a 347-residue protein sequence, read N- to C-terminus: tRNA N6-adenosine threonylcarbamoyltransferase (347 aa).

Fe cation is bound by residues H115 and H119. Substrate is bound by residues 137–141 (LASGG), D170, G183, and N281. Position 309 (D309) interacts with Fe cation.

Belongs to the KAE1 / TsaD family. Requires Fe(2+) as cofactor.

The protein localises to the cytoplasm. The enzyme catalyses L-threonylcarbamoyladenylate + adenosine(37) in tRNA = N(6)-L-threonylcarbamoyladenosine(37) in tRNA + AMP + H(+). In terms of biological role, required for the formation of a threonylcarbamoyl group on adenosine at position 37 (t(6)A37) in tRNAs that read codons beginning with adenine. Is involved in the transfer of the threonylcarbamoyl moiety of threonylcarbamoyl-AMP (TC-AMP) to the N6 group of A37, together with TsaE and TsaB. TsaD likely plays a direct catalytic role in this reaction. The chain is tRNA N6-adenosine threonylcarbamoyltransferase from Methylorubrum extorquens (strain CM4 / NCIMB 13688) (Methylobacterium extorquens).